Reading from the N-terminus, the 802-residue chain is Post-transcriptional regulator mkt1 (802 aa).

3 positions are modified to phosphoserine: S227, S228, and S230.

This sequence belongs to the XPG/RAD2 endonuclease family. As to quaternary structure, interacts with pab1 binding protein ath1.

In terms of biological role, involved in post-transcriptional regulation of gene expression by 3'-UTR-mediated RNA regulation. Promotes interactions between mRNA and poly(A)-binding protein. Binds the 3' UTR of mRNAs, centromeric transcripts and antisense-rDNA. Required for the establishment but not the maintenance of heterochromatin at pericentromeres, and for the maintenance of small domains of facultative heterochromatin known as HOODs. The protein is Post-transcriptional regulator mkt1 of Schizosaccharomyces pombe (strain 972 / ATCC 24843) (Fission yeast).